A 305-amino-acid chain; its full sequence is Heme A synthase (305 aa).

At 1–6 the chain is on the cytoplasmic side; it reads MKKFLK. A helical membrane pass occupies residues 7-27; that stretch reads VWSVLTIICMTVVVFGGALVT. Over 28–63 the chain is Extracellular; the sequence is KTGSADGCGNSWPLCNGQLVRLTDVTPEKLIEFMHR. Residues Cys35 and Cys42 are joined by a disulfide bond. The active site involves Glu59. His62 is a binding site for heme o. A helical membrane pass occupies residues 64-84; the sequence is MTTGISSIFVIVLAICAWIYM. The Cytoplasmic portion of the chain corresponds to 85 to 92; the sequence is KNRRETKP. The helical transmembrane segment at 93–113 threads the bilayer; the sequence is LAIIAVLFLIIQALMGMAAVV. Topologically, residues 114–122 are extracellular; the sequence is WGQNPYIMA. Residues 123-143 traverse the membrane as a helical segment; sequence LHFGISIICYASIVLLALMIF. Position 124 (His124) interacts with heme o. Topologically, residues 144–160 are cytoplasmic; it reads EVDRKFDARNLVMGTKL. A helical transmembrane segment spans residues 161–181; sequence RINIYALTIYTYLAVYTGALV. At 182 to 212 the chain is on the extracellular side; sequence RHEKASMAVPVWPFENGKFIMPDSVQDYVQY. Residues 213-233 form a helical membrane-spanning segment; it reads FHRVAAFILIVWLLYVTWLVF. Position 214 (His214) interacts with heme b. Residues 234 to 240 are Cytoplasmic-facing; it reads RDYRRYR. A helical membrane pass occupies residues 241–261; the sequence is VLTFSMVLSLLFIALQAVTGA. Topologically, residues 262-271 are extracellular; that stretch reads LSVYTGVNLY. A helical membrane pass occupies residues 272–292; that stretch reads IALAHSLIITMLFALLCYLCL. Residue His276 participates in heme b binding. At 293-305 the chain is on the cytoplasmic side; sequence LASRSKSNRLRIK.

The protein belongs to the COX15/CtaA family. Type 1 subfamily. Interacts with CtaB. Heme b is required as a cofactor.

Its subcellular location is the cell membrane. The catalysed reaction is Fe(II)-heme o + 2 A + H2O = Fe(II)-heme a + 2 AH2. It functions in the pathway porphyrin-containing compound metabolism; heme A biosynthesis; heme A from heme O: step 1/1. Catalyzes the conversion of heme O to heme A by two successive hydroxylations of the methyl group at C8. The first hydroxylation forms heme I, the second hydroxylation results in an unstable dihydroxymethyl group, which spontaneously dehydrates, resulting in the formyl group of heme A. This chain is Heme A synthase, found in Listeria welshimeri serovar 6b (strain ATCC 35897 / DSM 20650 / CCUG 15529 / CIP 8149 / NCTC 11857 / SLCC 5334 / V8).